The chain runs to 389 residues: Chalcone synthase 9 (389 aa).

Cys164 is a catalytic residue.

The protein belongs to the thiolase-like superfamily. Chalcone/stilbene synthases family.

The enzyme catalyses (E)-4-coumaroyl-CoA + 3 malonyl-CoA + 3 H(+) = 2',4,4',6'-tetrahydroxychalcone + 3 CO2 + 4 CoA. The protein operates within secondary metabolite biosynthesis; flavonoid biosynthesis. Its function is as follows. The primary product of this enzyme is 4,2',4',6'-tetrahydroxychalcone (also termed naringenin-chalcone or chalcone) which can under specific conditions spontaneously isomerize into naringenin. The protein is Chalcone synthase 9 (CHS9) of Daucus carota (Wild carrot).